A 473-amino-acid polypeptide reads, in one-letter code: Ribosomal RNA small subunit methyltransferase F (473 aa).

S-adenosyl-L-methionine contacts are provided by residues 124-130 (ASAPGSK), glutamate 148, aspartate 175, and aspartate 193. The active-site Nucleophile is the cysteine 246.

Belongs to the class I-like SAM-binding methyltransferase superfamily. RsmB/NOP family.

It localises to the cytoplasm. The catalysed reaction is cytidine(1407) in 16S rRNA + S-adenosyl-L-methionine = 5-methylcytidine(1407) in 16S rRNA + S-adenosyl-L-homocysteine + H(+). In terms of biological role, specifically methylates the cytosine at position 1407 (m5C1407) of 16S rRNA. In Aliivibrio salmonicida (strain LFI1238) (Vibrio salmonicida (strain LFI1238)), this protein is Ribosomal RNA small subunit methyltransferase F.